Consider the following 339-residue polypeptide: Nicotinate-nucleotide--dimethylbenzimidazole phosphoribosyltransferase (339 aa).

Residue Glu306 is the Proton acceptor of the active site.

The protein belongs to the CobT family.

It catalyses the reaction 5,6-dimethylbenzimidazole + nicotinate beta-D-ribonucleotide = alpha-ribazole 5'-phosphate + nicotinate + H(+). It functions in the pathway nucleoside biosynthesis; alpha-ribazole biosynthesis; alpha-ribazole from 5,6-dimethylbenzimidazole: step 1/2. Catalyzes the synthesis of alpha-ribazole-5'-phosphate from nicotinate mononucleotide (NAMN) and 5,6-dimethylbenzimidazole (DMB). The protein is Nicotinate-nucleotide--dimethylbenzimidazole phosphoribosyltransferase of Brucella melitensis biotype 1 (strain ATCC 23456 / CCUG 17765 / NCTC 10094 / 16M).